A 343-amino-acid chain; its full sequence is tRNA N6-adenosine threonylcarbamoyltransferase (343 aa).

2 residues coordinate Fe cation: H120 and H124. Substrate is bound by residues 142–146 (VVSGG), D175, G188, D192, and N281. D309 contributes to the Fe cation binding site.

This sequence belongs to the KAE1 / TsaD family. It depends on Fe(2+) as a cofactor.

It is found in the cytoplasm. It carries out the reaction L-threonylcarbamoyladenylate + adenosine(37) in tRNA = N(6)-L-threonylcarbamoyladenosine(37) in tRNA + AMP + H(+). Functionally, required for the formation of a threonylcarbamoyl group on adenosine at position 37 (t(6)A37) in tRNAs that read codons beginning with adenine. Is involved in the transfer of the threonylcarbamoyl moiety of threonylcarbamoyl-AMP (TC-AMP) to the N6 group of A37, together with TsaE and TsaB. TsaD likely plays a direct catalytic role in this reaction. In Halalkalibacterium halodurans (strain ATCC BAA-125 / DSM 18197 / FERM 7344 / JCM 9153 / C-125) (Bacillus halodurans), this protein is tRNA N6-adenosine threonylcarbamoyltransferase.